We begin with the raw amino-acid sequence, 419 residues long: Methionine aminopeptidase 2 (419 aa).

The disordered stretch occupies residues 1–69; the sequence is MSTNSSNPNE…KITAIDNSYP (69 aa). Residues 11-29 are compositionally biased toward basic and acidic residues; sequence VMEKVQDLKIDDSKPKVDS. The span at 30 to 41 shows a compositional bias: acidic residues; it reads EEQPEAESDGES. Positions 48 to 61 are enriched in basic residues; that stretch reads KKKKKKKSKKKKKI. A substrate-binding site is contributed by His172. Residues Asp192, Asp203, and His272 each coordinate a divalent metal cation. A substrate-binding site is contributed by His280. Positions 305 and 400 each coordinate a divalent metal cation.

The protein belongs to the peptidase M24A family. Methionine aminopeptidase eukaryotic type 2 subfamily. It depends on Co(2+) as a cofactor. Zn(2+) serves as cofactor. The cofactor is Mn(2+). Fe(2+) is required as a cofactor.

The protein resides in the cytoplasm. The catalysed reaction is Release of N-terminal amino acids, preferentially methionine, from peptides and arylamides.. Functionally, cotranslationally removes the N-terminal methionine from nascent proteins. The N-terminal methionine is often cleaved when the second residue in the primary sequence is small and uncharged (Met-Ala-, Cys, Gly, Pro, Ser, Thr, or Val). The chain is Methionine aminopeptidase 2 from Debaryomyces hansenii (strain ATCC 36239 / CBS 767 / BCRC 21394 / JCM 1990 / NBRC 0083 / IGC 2968) (Yeast).